Here is a 341-residue protein sequence, read N- to C-terminus: HTH-type transcriptional repressor PurR (341 aa).

Residues 2 to 56 (ATIKDVAKRAGVSTTTVSHVINKTRFVADETREAVWVAIKELHYSPSAVARSLKV) enclose the HTH lacI-type domain. A DNA-binding region (H-T-H motif) is located at residues 4-23 (IKDVAKRAGVSTTTVSHVIN). Residues 48-56 (SAVARSLKV) mediate DNA binding. Y73, R190, T192, F221, and D275 together coordinate hypoxanthine.

In terms of assembly, homodimer.

It participates in purine metabolism; purine nucleotide biosynthesis [regulation]. Its function is as follows. Is the main repressor of the genes involved in the de novo synthesis of purine nucleotides, regulating purB, purC, purEK, purF, purHD, purL, purMN and guaBA expression. PurR is allosterically activated to bind its cognate DNA by binding the purine corepressors, hypoxanthine or guanine, thereby effecting transcription repression. The chain is HTH-type transcriptional repressor PurR from Erwinia tasmaniensis (strain DSM 17950 / CFBP 7177 / CIP 109463 / NCPPB 4357 / Et1/99).